The following is a 1188-amino-acid chain: AT-rich interactive domain-containing protein 5B (1188 aa).

A Glycyl lysine isopeptide (Lys-Gly) (interchain with G-Cter in SUMO2) cross-link involves residue Lys130. The tract at residues 251-277 is disordered; it reads RPRKKKPCPQRRDSFSGVKDSNNNSDG. Ser264 bears the Phosphoserine mark. The ARID domain occupies 318–410; that stretch reads RADEQAFLVA…LILPYERFIK (93 aa). An N6,N6-dimethyllysine modification is found at Lys336. Positions 412–611 are disordered; the sequence is EEDKPLPPIK…QPPLANQNET (200 aa). Lys445 participates in a covalent cross-link: Glycyl lysine isopeptide (Lys-Gly) (interchain with G-Cter in SUMO2). Residues 446–458 show a composition bias toward basic and acidic residues; sequence HEIPKSKKEKENA. Residues Lys494 and Lys496 each participate in a glycyl lysine isopeptide (Lys-Gly) (interchain with G-Cter in SUMO2) cross-link. Over residues 597-609 the composition is skewed to polar residues; that stretch reads SFPTTQPPLANQN. Glycyl lysine isopeptide (Lys-Gly) (interchain with G-Cter in SUMO2) cross-links involve residues Lys767, Lys774, Lys803, and Lys810. Disordered regions lie at residues 846–874 and 891–918; these read HHLHNEQTSKYPSRDMYRESENSSFPSHR and DKKSAAAEAPTDDQPTDLSLPKNPHKPT. Residues 847–866 show a composition bias toward basic and acidic residues; it reads HLHNEQTSKYPSRDMYRESE. Residues Lys893, Lys916, Lys920, and Lys935 each participate in a glycyl lysine isopeptide (Lys-Gly) (interchain with G-Cter in SUMO2) cross-link. The disordered stretch occupies residues 956-978; that stretch reads RVSPMTMSGPKKYPESLSRSGKP. Residues Lys988, Lys1000, and Lys1013 each participate in a glycyl lysine isopeptide (Lys-Gly) (interchain with G-Cter in SUMO2) cross-link. Positions 1028-1070 are disordered; the sequence is ARAVSPLDPSKEVSGKEKASEQESEGSKAAHGGHSGGGSEGHK. Ser1032 is modified (phosphoserine). Residues 1036–1055 are compositionally biased toward basic and acidic residues; sequence PSKEVSGKEKASEQESEGSK. Residues Lys1055 and Lys1070 each participate in a glycyl lysine isopeptide (Lys-Gly) (interchain with G-Cter in SUMO2) cross-link. Ser1133 bears the Phosphoserine mark.

This sequence belongs to the ARID5B family. Methylation at Lys-336 prevents DNA-binding. Demethylation by PHF2 promotes recruitment of the PHF2-ARID5B complex to promoters. In terms of tissue distribution, widely expressed, including in liver (at protein level).

It is found in the nucleus. Its function is as follows. Transcription coactivator that binds to the 5'-AATA[CT]-3' core sequence and plays a key role in adipogenesis and liver development. Acts by forming a complex with phosphorylated PHF2, which mediates demethylation at Lys-336, leading to target the PHF2-ARID5B complex to target promoters, where PHF2 mediates demethylation of dimethylated 'Lys-9' of histone H3 (H3K9me2), followed by transcription activation of target genes. The PHF2-ARID5B complex acts as a coactivator of HNF4A in liver. Required for adipogenesis: regulates triglyceride metabolism in adipocytes by regulating expression of adipogenic genes. Overexpression leads to induction of smooth muscle marker genes, suggesting that it may also act as a regulator of smooth muscle cell differentiation and proliferation. Represses the cytomegalovirus enhancer. The protein is AT-rich interactive domain-containing protein 5B (ARID5B) of Homo sapiens (Human).